The chain runs to 479 residues: Putative L-cysteine desulfhydrase 2 (479 aa).

The disordered stretch occupies residues 1 to 36 (MASLQSGGDAAANGVDADVDGAASPPSAKRPRAGAG). The segment covering 7–36 (GGDAAANGVDADVDGAASPPSAKRPRAGAG) has biased composition (low complexity). N6-(pyridoxal phosphate)lysine is present on Lys-270.

This sequence belongs to the class-V pyridoxal-phosphate-dependent aminotransferase family. The cofactor is pyridoxal 5'-phosphate.

The catalysed reaction is L-cysteine + H2O = hydrogen sulfide + pyruvate + NH4(+) + H(+). Its function is as follows. Catalyzes the production of hydrogen sulfide (H2S) from cysteine. The protein is Putative L-cysteine desulfhydrase 2 of Oryza sativa subsp. japonica (Rice).